The primary structure comprises 274 residues: Hydroxyethylthiazole kinase (274 aa).

Met50 serves as a coordination point for substrate. Positions 126 and 171 each coordinate ATP. Ala200 serves as a coordination point for substrate.

Belongs to the Thz kinase family. Mg(2+) serves as cofactor.

The catalysed reaction is 5-(2-hydroxyethyl)-4-methylthiazole + ATP = 4-methyl-5-(2-phosphooxyethyl)-thiazole + ADP + H(+). It functions in the pathway cofactor biosynthesis; thiamine diphosphate biosynthesis; 4-methyl-5-(2-phosphoethyl)-thiazole from 5-(2-hydroxyethyl)-4-methylthiazole: step 1/1. Catalyzes the phosphorylation of the hydroxyl group of 4-methyl-5-beta-hydroxyethylthiazole (THZ). This is Hydroxyethylthiazole kinase from Acinetobacter baylyi (strain ATCC 33305 / BD413 / ADP1).